A 232-amino-acid polypeptide reads, in one-letter code: Large ribosomal subunit protein uL3 (232 aa).

It belongs to the universal ribosomal protein uL3 family. As to quaternary structure, part of the 50S ribosomal subunit. Forms a cluster with proteins L14 and L19.

Its function is as follows. One of the primary rRNA binding proteins, it binds directly near the 3'-end of the 23S rRNA, where it nucleates assembly of the 50S subunit. In Sorangium cellulosum (strain So ce56) (Polyangium cellulosum (strain So ce56)), this protein is Large ribosomal subunit protein uL3.